Consider the following 208-residue polypeptide: Apoptosis inhibitor 193R (208 aa).

The interval 1–25 (MDTCGIYNSDNEEFSQENDGENDGG) is disordered. Residues 10–23 (DNEEFSQENDGEND) are compositionally biased toward acidic residues. Residues 37–108 (YDERLNSFQN…QDLKINCLFV (72 aa)) form a BIR repeat. Residues C74, C77, H94, and C105 each contribute to the Zn(2+) site. A run of 3 repeats spans residues 134-139 (NQDLDH), 140-145 (NQDLDH), and 146-151 (NQDLDQ). The interval 134–151 (NQDLDHNQDLDHNQDLDQ) is 3 X 6 AA tandem repeats. The segment at 163–197 (CKICFTNKITKVLIPCGHSSCYECVFKLQTCPICK) adopts an RING-type zinc-finger fold.

This sequence belongs to the IIV-6 193R family.

In terms of biological role, plays a role early in infection by preventing host cell apoptosis. In Invertebrate iridescent virus 6 (IIV-6), this protein is Apoptosis inhibitor 193R.